Reading from the N-terminus, the 394-residue chain is MSKEKFERTKPHVNVGTIGHVDHGKTTLTAAITTVLSKHFGGAARAFDQIDNAPEEKARGITINTSHVEYDTATRHYAHVDCPGHADYVKNMITGAAQMDGAILVVAATDGPMPQTREHILLGRQVGVPYIIVFLNKCDMVDDEELLELVEMEVRELLSQYDFPGDDTPIVRGSALQALNGVAEWEEKILELASHLDNYIPEPERAIDQPFLLPIEDVFSISGRGTVVTGRVERGIIRTGEEVEIVGIKETTKTTVTGVEMFRKLLDEGRAGENIGALLRGTKREEIERGQVLAKPGSITPHTDFESEVYVLSKEEGGRHTPFFKGYRPQFYFRTTDVTGTIELPEGVEMVMPGDNIKMTVSLIHPIAMDQGLRFAIREGGRTVGAGVVAKIIK.

One can recognise a tr-type G domain in the interval 10 to 204 (KPHVNVGTIG…HLDNYIPEPE (195 aa)). The segment at 19-26 (GHVDHGKT) is G1. 19–26 (GHVDHGKT) provides a ligand contact to GTP. Thr26 lines the Mg(2+) pocket. A G2 region spans residues 60-64 (GITIN). The G3 stretch occupies residues 81 to 84 (DCPG). Residues 81–85 (DCPGH) and 136–139 (NKCD) contribute to the GTP site. The segment at 136–139 (NKCD) is G4. The G5 stretch occupies residues 174–176 (SAL).

It belongs to the TRAFAC class translation factor GTPase superfamily. Classic translation factor GTPase family. EF-Tu/EF-1A subfamily. In terms of assembly, monomer.

The protein resides in the cytoplasm. The enzyme catalyses GTP + H2O = GDP + phosphate + H(+). Functionally, GTP hydrolase that promotes the GTP-dependent binding of aminoacyl-tRNA to the A-site of ribosomes during protein biosynthesis. This is Elongation factor Tu from Histophilus somni (strain 129Pt) (Haemophilus somnus).